The sequence spans 162 residues: uncharacterized protein (162 aa).

An N-terminal signal peptide occupies residues 1-24; it reads MCKRFKFLLAVSALFISITVVLAG. Cysteine 25 carries the N-palmitoyl cysteine lipid modification. Cysteine 25 carries the S-diacylglycerol cysteine lipid modification.

The protein resides in the cell membrane. This is an uncharacterized protein from Bacillus anthracis.